A 262-amino-acid chain; its full sequence is 5'-nucleotidase SurE (262 aa).

Residues aspartate 8, aspartate 9, serine 40, and asparagine 92 each contribute to the a divalent metal cation site.

The protein belongs to the SurE nucleotidase family. Requires a divalent metal cation as cofactor.

The protein resides in the cytoplasm. The catalysed reaction is a ribonucleoside 5'-phosphate + H2O = a ribonucleoside + phosphate. Nucleotidase that shows phosphatase activity on nucleoside 5'-monophosphates. The polypeptide is 5'-nucleotidase SurE (Xylella fastidiosa (strain 9a5c)).